An 880-amino-acid polypeptide reads, in one-letter code: Alanine--tRNA ligase (880 aa).

Residues histidine 567, histidine 571, cysteine 669, and histidine 673 each coordinate Zn(2+).

It belongs to the class-II aminoacyl-tRNA synthetase family. The cofactor is Zn(2+).

It is found in the cytoplasm. It catalyses the reaction tRNA(Ala) + L-alanine + ATP = L-alanyl-tRNA(Ala) + AMP + diphosphate. Catalyzes the attachment of alanine to tRNA(Ala) in a two-step reaction: alanine is first activated by ATP to form Ala-AMP and then transferred to the acceptor end of tRNA(Ala). Also edits incorrectly charged Ser-tRNA(Ala) and Gly-tRNA(Ala) via its editing domain. The sequence is that of Alanine--tRNA ligase from Bacillus cytotoxicus (strain DSM 22905 / CIP 110041 / 391-98 / NVH 391-98).